The chain runs to 942 residues: VPS35 endosomal protein sorting factor-like (942 aa).

It belongs to the VPS35L family. Component of the heterotrimeric retriever complex.

Its subcellular location is the endosome. In terms of biological role, acts as a component of the retriever complex. The retriever complex is a heterotrimeric complex related to retromer cargo-selective complex (CSC) and essential for retromer-independent retrieval and recycling of numerous cargos. The sequence is that of VPS35 endosomal protein sorting factor-like from Drosophila melanogaster (Fruit fly).